Here is a 695-residue protein sequence, read N- to C-terminus: G-protein coupled receptor-associated protein LMBRD2 (695 aa).

Over 1 to 5 the chain is Extracellular; that stretch reads MSGAA. Residues 6–21 form a helical membrane-spanning segment; the sequence is LGLEIVFVFFLALFLL. Residues 22 to 32 lie on the Cytoplasmic side of the membrane; the sequence is HRYGDFKKQHR. The helical transmembrane segment at 33–53 threads the bilayer; the sequence is LVIIGTLLAWYLCFLIVFILP. Over 54–105 the chain is Extracellular; sequence LDVSTTIYNRCKHAAANSSPPENSNITGLYATANPVPSQHPCFKPWSYIPDG. An N-linked (GlcNAc...) asparagine glycan is attached at N78. The chain crosses the membrane as a helical span at residues 106-126; that stretch reads IMPIFWRVVYWTSQFLTWILL. The Cytoplasmic segment spans residues 127 to 150; that stretch reads PFMQSYARSGGFSITGKIKTALIE. Residues 151–171 traverse the membrane as a helical segment; that stretch reads NAIYYGTYLLIFGAFLIYVAV. Topologically, residues 172–186 are extracellular; the sequence is NPHLHLEWNQLQTIG. The chain crosses the membrane as a helical span at residues 187–207; it reads IAAANTWGLFLLVLLLGYGLV. At 208–387 the chain is on the cytoplasmic side; the sequence is EIPRSYWNGA…ECLLRPWFYK (180 aa). Residues 227–262 are a coiled coil; sequence YFKAAKLMTEKADAEENLEDAMEEVRKVNESIKYNH. Residues 388-408 form a helical membrane-spanning segment; that stretch reads ILAVVLSIFSVIVVWSECTFF. Residues 409–432 are Extracellular-facing; it reads STTPVLSLFAVFIQLAEKTYNYIY. A helical transmembrane segment spans residues 433 to 453; sequence IEIACFLSIFFLSICVYSTVF. The Cytoplasmic portion of the chain corresponds to 454–473; it reads RIRVFNYYYLASHHQTDAYS. A helical transmembrane segment spans residues 474–494; that stretch reads LLFSGMLFCRLTPPLCLNFLG. At 495–521 the chain is on the extracellular side; sequence LTHMDSSISHKNTQPTAYTSIMGSMKV. A helical membrane pass occupies residues 522-542; sequence LSFIADGFYIYYPMLVVILCI. At 543 to 695 the chain is on the cytoplasmic side; it reads ATYFSLGTRC…MSRSDIFNDV (153 aa). Positions 571-603 form a coiled coil; the sequence is LVNEGKELIRKEKRKRQRQEEGENRRREWKERY. Positions 581-628 are disordered; that stretch reads KEKRKRQRQEEGENRRREWKERYGHNREDSTRNRNIHTDPKESNFSDV. The segment covering 588-624 has biased composition (basic and acidic residues); that stretch reads RQEEGENRRREWKERYGHNREDSTRNRNIHTDPKESN. S633 carries the post-translational modification Phosphoserine. The disordered stretch occupies residues 662-682; the sequence is AETFTDDPLESESGRYQPGGR.

This sequence belongs to the LIMR family.

It is found in the cell membrane. Functionally, recruited to ligand-activated beta-2 adrenergic receptor/ADRB2, it negatively regulates the adrenergic receptor signaling pathway. May also regulate other G-protein coupled receptors including type-1 angiotensin II receptor/AGTR1. The polypeptide is G-protein coupled receptor-associated protein LMBRD2 (Homo sapiens (Human)).